Here is an 895-residue protein sequence, read N- to C-terminus: Catenin alpha-3 (895 aa).

The residue at position 56 (serine 56) is a Phosphoserine. The stretch at 74–111 (EKIAQEATVLKDELTASLEEVRKESEALKVSAERFTDD) forms a coiled coil. Serine 160 carries the post-translational modification Phosphoserine. Residues 325–379 (RERIIAECNAIRQALQDLLSEYMNNAGKKERSNTLNIALDNMCKKTRDLRRQLRK) are a coiled coil. 2 positions are modified to phosphoserine: serine 637 and serine 647. Threonine 649 bears the Phosphothreonine mark.

Belongs to the vinculin/alpha-catenin family. Interacts with CTNNB1. Interacts with PKP2. Predominantly expressed in heart and testis. Expressed at lower levels in brain, kidney, liver and skeletal muscle.

The protein localises to the cytoplasm. Its subcellular location is the cytoskeleton. It is found in the cell junction. The protein resides in the desmosome. In terms of biological role, may be involved in formation of stretch-resistant cell-cell adhesion complexes. The chain is Catenin alpha-3 from Homo sapiens (Human).